The following is a 431-amino-acid chain: C2H2 type master regulator of conidiophore development brlA (431 aa).

Disordered stretches follow at residues 29 to 51 (MTSS…SHGS), 211 to 275 (TPQQ…SEEY), and 287 to 306 (IRTH…VRSN). Over residues 30 to 48 (TSSFSPLESPTPTPTSLYS) the composition is skewed to low complexity. Over residues 225 to 265 (PSSNYSDFPASLQTFKPHTPSTPVRSLSLGTPRSDTPQSRM) the composition is skewed to polar residues. Over residues 287–302 (IRTHRQPSRKPSKKQL) the composition is skewed to basic residues. 2 C2H2-type zinc fingers span residues 321-345 (FKCK…MKSH) and 351-376 (HVCW…TKTH). The interval 390–412 (DETSPDYDPEFRGQLTPDGRPIY) is disordered.

It localises to the nucleus. Functionally, brlA, abaA and wetA are pivotal regulators of conidiophore development and conidium maturation. They act individually and together to regulate their own expression and that of numerous other sporulation-specific genes. Binds promoters of target genes at brlA response elements (BREs) containing the conserved sequence 5'-(C/A)(A/G)AGGG(G/A)-3'. Regulates the expression levels of seven secondary metabolism gene clusters including a down-regulated cluster putatively involved in the biosynthesis of the mycotoxins roquefortine C and meleagrin. Negatively regulates the expression of cellulase genes. This is C2H2 type master regulator of conidiophore development brlA from Penicillium oxalicum (strain 114-2 / CGMCC 5302) (Penicillium decumbens).